We begin with the raw amino-acid sequence, 222 residues long: UPF0758 protein TM_1557 (222 aa).

In terms of domain architecture, MPN spans 101-222 (KLDSSVKVYK…YFSFREEGEL (122 aa)). The Zn(2+) site is built by His171, His173, and Asp184. Residues 171–184 (HNHPSGDPTPSKED) carry the JAMM motif motif.

It belongs to the UPF0758 family.

The sequence is that of UPF0758 protein TM_1557 from Thermotoga maritima (strain ATCC 43589 / DSM 3109 / JCM 10099 / NBRC 100826 / MSB8).